Consider the following 474-residue polypeptide: Lysosomal protective protein (474 aa).

The N-terminal stretch at 1–23 (MPGTALSPLLLLLLLSWASRNEA) is a signal peptide. 4 cysteine pairs are disulfide-bonded: cysteine 83–cysteine 356, cysteine 235–cysteine 251, cysteine 236–cysteine 241, and cysteine 276–cysteine 325. The N-linked (GlcNAc...) (high mannose) asparagine glycan is linked to asparagine 140. Serine 173 is an active-site residue. Asparagine 327 is a glycosylation site (N-linked (GlcNAc...) (high mannose) asparagine). Active-site residues include aspartate 394 and histidine 451.

The protein belongs to the peptidase S10 family. In terms of assembly, heterodimer of a 32 kDa chain and a 20 kDa chain; disulfide-linked.

The protein resides in the lysosome. It carries out the reaction Release of a C-terminal amino acid with broad specificity.. Its function is as follows. Protective protein appears to be essential for both the activity of beta-galactosidase and neuraminidase, it associates with these enzymes and exerts a protective function necessary for their stability and activity. This protein is also a carboxypeptidase and can deamidate tachykinins. The polypeptide is Lysosomal protective protein (Ctsa) (Mus musculus (Mouse)).